Consider the following 664-residue polypeptide: Frizzled-3 (664 aa).

Positions 1 to 16 (MAAYLISFIWVSVILA) are cleaved as a signal peptide. The Extracellular portion of the chain corresponds to 17-204 (QKSMGHSLFA…REELSFARYF (188 aa)). One can recognise an FZ domain in the interval 22 to 135 (HSLFACEPIT…CSRFPDCDEP (114 aa)). 5 disulfide bridges follow: C27-C88, C35-C81, C72-C109, C98-C132, and C102-C126. The N-linked (GlcNAc...) asparagine glycan is linked to N41. The helical transmembrane segment at 205–225 (IGVISIVCLSATLFTFLTFLI) threads the bilayer. Over 226 to 236 (DVTRFRYPERP) the chain is Cytoplasmic. A helical membrane pass occupies residues 237-257 (IIFYAVCYMMVSLIFFIGFLL). Residues 258–287 (EDKVACNGANPSQYKASTVTQGSHNKACTM) are Extracellular-facing. Residues 288–308 (LFMVLYFFTMAGSVWWVILTI) form a helical membrane-spanning segment. Residues 309–327 (TWFLAAVPKWGSEAIEKKA) are Cytoplasmic-facing. A helical transmembrane segment spans residues 328–348 (LLFHASAWGIPGTLTIILLAM). The Extracellular portion of the chain corresponds to 349 to 373 (NKIEGDNISGVCFVGLYDVHALRYF). A glycan (N-linked (GlcNAc...) asparagine) is linked at N355. The helical transmembrane segment at 374-394 (VLAPLCLDVVVGVSLLLAGII) threads the bilayer. Residues 395–419 (SLNRVRIEIPLEKENQDKLVKFMIR) lie on the Cytoplasmic side of the membrane. A helical transmembrane segment spans residues 420–440 (IGVFSILYLVPLLVVIGCYFY). Topologically, residues 441–476 (EQAYRGVWETTWVQERCREYHIPCPYKVTQTSRPDL) are extracellular. Residues 477–497 (ILFLMKYLMLLVVGIPSVFWV) traverse the membrane as a helical segment. Residues 498–664 (GSKKTCFEWA…RVIEADATSA (167 aa)) are Cytoplasmic-facing. Residues 501-506 (KTCFEW) carry the Lys-Thr-X-X-X-Trp motif, mediates interaction with the PDZ domain of Dvl family members motif. A disordered region spans residues 537–664 (RDPNTPIVRK…RVIEADATSA (128 aa)). 2 stretches are compositionally biased toward polar residues: residues 549–564 (GTST…STQL) and 573–585 (KAGS…SSYH).

This sequence belongs to the G-protein coupled receptor Fz/Smo family. As to expression, expression restricted to the early nervous system.

The protein resides in the membrane. It localises to the cell membrane. The protein localises to the cell surface. Its subcellular location is the apical cell membrane. Functionally, receptor for Wnt proteins. Most of frizzled receptors are coupled to the beta-catenin canonical signaling pathway, which leads to the activation of disheveled proteins, inhibition of GSK-3 kinase, nuclear accumulation of beta-catenin and activation of Wnt target genes. A second signaling pathway involving PKC and calcium fluxes has been seen for some family members, but it is not yet clear if it represents a distinct pathway or if it can be integrated in the canonical pathway, as PKC seems to be required for Wnt-mediated inactivation of GSK-3 kinase. Both pathways seem to involve interactions with G-proteins. Activated by Wnt8. Involved in transduction and intercellular transmission of polarity information during tissue morphogenesis and/or in differentiated tissues. Plays a role in controlling early axon growth and guidance processes necessary for the formation of a subset of central and peripheral major fiber tracts. Involved in the migration of cranial neural crest cells. May also be implicated in the transmission of sensory information from the trunk and limbs to the brain. Controls commissural sensory axons guidance after midline crossing along the anterior-posterior axis in the developing spinal cord in a Wnt-dependent signaling pathway. Together with FZD6, is involved in the neural tube closure and plays a role in the regulation of the establishment of planar cell polarity (PCP). Promotes neurogenesis by maintaining sympathetic neuroblasts within the cell cycle in a beta-catenin-dependent manner. This Xenopus laevis (African clawed frog) protein is Frizzled-3 (fzd3).